Reading from the N-terminus, the 1017-residue chain is Protein translocase subunit SecA 1 (1017 aa).

ATP contacts are provided by residues Gln143, Gly161 to Thr165, and Asp661. The disordered stretch occupies residues Gly978–Arg999. Zn(2+) contacts are provided by Cys1003, Cys1005, Cys1014, and Cys1015.

The protein belongs to the SecA family. Monomer and homodimer. Part of the essential Sec protein translocation apparatus which comprises SecA, SecYEG and auxiliary proteins SecDF. Other proteins may also be involved. Requires Zn(2+) as cofactor.

It localises to the cell inner membrane. The protein localises to the cytoplasm. It catalyses the reaction ATP + H2O + cellular proteinSide 1 = ADP + phosphate + cellular proteinSide 2.. Its function is as follows. Part of the Sec protein translocase complex. Interacts with the SecYEG preprotein conducting channel. Has a central role in coupling the hydrolysis of ATP to the transfer of proteins into and across the cell membrane, serving as an ATP-driven molecular motor driving the stepwise translocation of polypeptide chains across the membrane. This chain is Protein translocase subunit SecA 1, found in Chlorobium chlorochromatii (strain CaD3).